The chain runs to 233 residues: Small ribosomal subunit protein uS3 (233 aa).

The region spanning 39–107 (VREFLKAKLK…PVHVNIEEVR (69 aa)) is the KH type-2 domain. The disordered stretch occupies residues 209–233 (PGQVSAEPTQPEKKMRKGGRNAAAN).

This sequence belongs to the universal ribosomal protein uS3 family. In terms of assembly, part of the 30S ribosomal subunit. Forms a tight complex with proteins S10 and S14.

Binds the lower part of the 30S subunit head. Binds mRNA in the 70S ribosome, positioning it for translation. In Laribacter hongkongensis (strain HLHK9), this protein is Small ribosomal subunit protein uS3.